The primary structure comprises 139 residues: uncharacterized protein (139 aa).

This is an uncharacterized protein from Sinorhizobium fredii (strain NBRC 101917 / NGR234).